A 158-amino-acid chain; its full sequence is Ribosome maturation factor RimP (158 aa).

This sequence belongs to the RimP family.

The protein localises to the cytoplasm. Required for maturation of 30S ribosomal subunits. The polypeptide is Ribosome maturation factor RimP (Pseudomonas putida (strain ATCC 47054 / DSM 6125 / CFBP 8728 / NCIMB 11950 / KT2440)).